The chain runs to 425 residues: Glutamyl-tRNA reductase (425 aa).

Substrate contacts are provided by residues 47-50 (TCNR), serine 107, 112-114 (EDQ), and glutamine 118. Residue cysteine 48 is the Nucleophile of the active site. NADP(+) is bound at residue 187-192 (GAGHMA).

Belongs to the glutamyl-tRNA reductase family. Homodimer.

It catalyses the reaction (S)-4-amino-5-oxopentanoate + tRNA(Glu) + NADP(+) = L-glutamyl-tRNA(Glu) + NADPH + H(+). It participates in porphyrin-containing compound metabolism; protoporphyrin-IX biosynthesis; 5-aminolevulinate from L-glutamyl-tRNA(Glu): step 1/2. It functions in the pathway porphyrin-containing compound metabolism; chlorophyll biosynthesis. Catalyzes the NADPH-dependent reduction of glutamyl-tRNA(Glu) to glutamate 1-semialdehyde (GSA). The polypeptide is Glutamyl-tRNA reductase (Roseiflexus castenholzii (strain DSM 13941 / HLO8)).